The sequence spans 3470 residues: Mucin-4 (3470 aa).

The first 28 residues, 1–28 (MRGPHWRVPWLCLSCLYSCLLLLPDALA), serve as a signal peptide directing secretion. The interval 32–163 (TQTPMSLSSS…STESTSVDSG (132 aa)) is disordered. Residues 37 to 57 (SLSSSTRTSQMSSQASTSSTS) show a composition bias toward low complexity. 24 O-linked (GalNAc...) threonine glycosylation sites follow: Thr-42, Thr-44, Thr-65, Thr-68, Thr-87, Thr-91, Thr-96, Thr-97, Thr-98, Thr-99, Thr-100, Thr-103, Thr-104, Thr-106, Thr-117, Thr-130, Thr-131, Thr-132, Thr-145, Thr-146, Thr-150, Thr-151, Thr-152, and Thr-155. Positions 43-2501 (RTSQMSSQAS…ETLINDFTSS (2459 aa)) are variable number of tandem repeats (VNTR). Positions 66–85 (EQTSTRDTPSSITTVSQSHH) are enriched in polar residues. Over residues 86–111 (TTSMETSKPQTTTTTEVTTSTPSASS) the composition is skewed to low complexity. A compositionally biased stretch (polar residues) spans 112–129 (RDQIQTETSSQRTISPDG). Residues 130–162 (TTTSHAPSISSSAPSTTHMLTTTSSTESTSVDS) are compositionally biased toward low complexity. The N-linked (GlcNAc...) asparagine glycan is linked to Asn-188. A compositionally biased stretch (polar residues) spans 199 to 220 (TLTQRQHTGSKQTSSKSQVNIV). 7 disordered regions span residues 199–679 (TLTQ…STVS), 691–925 (FPQS…NMST), 938–1219 (TLPQ…MSTV), 1232–1400 (LPQS…MSTV), 1413–1524 (LPQS…MSTV), 1537–1647 (LPKS…NMST), and 1660–1992 (TLPQ…TEIT). The segment covering 221-232 (TSTLSTSTSDST) has biased composition (low complexity). Over residues 233-243 (PAQTMSQVTSS) the composition is skewed to polar residues. O-linked (GalNAc...) threonine glycosylation is found at Thr-236 and Thr-241. Residues 251-272 (STSGVSSTSLTTTEVLTQTSST) are compositionally biased toward low complexity. Residues 273-283 (DSAPGNTTLRI) are compositionally biased toward polar residues. Asn-278 and Asn-286 each carry an N-linked (GlcNAc...) asparagine glycan. Low complexity predominate over residues 284–299 (TQNSTTHTTKVSTTST). Thr-297 carries an O-linked (GalNAc...) threonine glycan. The span at 300–335 (PQKLSPVSTLINSSQKMSTLPQNQHTESMDTSRQPQ) shows a compositional bias: polar residues. Asn-311 carries N-linked (GlcNAc...) asparagine glycosylation. Low complexity predominate over residues 336-346 (TTTTIEVTTST). The span at 347 to 448 (PSASSLHQIQ…LTSSYSQHIQ (102 aa)) shows a compositional bias: polar residues. Residues Thr-357, Thr-370, Thr-371, Thr-372, Thr-385, and Thr-423 are each glycosylated (O-linked (GalNAc...) threonine). Over residues 449 to 470 (SKGTSSKSQTTTNTKVNTSTPS) the composition is skewed to low complexity. Asn-465 carries an N-linked (GlcNAc...) asparagine glycan. Positions 479-489 (TETSSQRTNSP) are enriched in polar residues. Residue Thr-494 is glycosylated (O-linked (GalNAc...) threonine). A compositionally biased stretch (low complexity) spans 496–510 (HAPSMSSSAPSTTHM). Residues 511 to 577 (LSTTSSNQST…SQSQHTGSKG (67 aa)) are compositionally biased toward polar residues. An O-linked (GalNAc...) threonine glycan is attached at Thr-513. N-linked (GlcNAc...) asparagine glycosylation is present at Asn-517. Residues Thr-542 and Thr-545 are each glycosylated (O-linked (GalNAc...) threonine). Asn-550 carries N-linked (GlcNAc...) asparagine glycosylation. Residues Thr-551, Thr-584, Thr-585, Thr-586, Thr-587, Thr-588, Thr-592, Thr-594, Thr-599, Thr-605, Thr-618, Thr-619, Thr-620, Thr-633, Thr-634, Thr-639, Thr-640, and Thr-655 are each glycosylated (O-linked (GalNAc...) threonine). A compositionally biased stretch (low complexity) spans 578-599 (TSSNPQTTTTTEVTTSTPSATT). Over residues 600–631 (HDQIQTETSSQNTISPGETTTSYAPIMSSSAP) the composition is skewed to polar residues. Over residues 632–647 (STTHMLSTTSSTQSTS) the composition is skewed to low complexity. Composition is skewed to polar residues over residues 653-679 (TTTLTNQGSTPATTQVSPSSQNMSTVS) and 691-701 (FPQSQHTGSKG). The N-linked (GlcNAc...) asparagine glycan is linked to Asn-674. Residues Thr-702, Thr-708, Thr-709, Thr-710, Thr-711, and Thr-716 are each glycosylated (O-linked (GalNAc...) threonine). Low complexity predominate over residues 702–723 (TSSNPQTTTTPVVTTSNPSATS). The N-linked (GlcNAc...) asparagine glycan is linked to Asn-718. Polar residues predominate over residues 724-741 (RDQIQTETSSQRTISPGE). Positions 742 to 772 (TTTSYASIMSSSAPSTTHMLTTTSSTQSTSV) are enriched in low complexity. Thr-743, Thr-744, Thr-757, and Thr-758 each carry an O-linked (GalNAc...) threonine glycan. Residues 780–824 (VRTQGSTPATTQVSPSSQNMSTVSTPITSTQILSTLPQSQHTGSK) are compositionally biased toward polar residues. Asn-798 carries an N-linked (GlcNAc...) asparagine glycan. A compositionally biased stretch (low complexity) spans 825–848 (GTSSNPQTTTSPVVTTSTPSGTSG). O-linked (GalNAc...) threonine glycosylation is found at Thr-826, Thr-832, Thr-833, Thr-834, Thr-839, Thr-840, Thr-842, Thr-846, and Thr-853. The segment covering 849 to 879 (DQIQTETSSQRTISPGKTTTSHALNINSSAP) has biased composition (polar residues). N-linked (GlcNAc...) asparagine glycosylation is present at Asn-875. Residues 880–895 (STTHMLSTTSSTQSTS) show a composition bias toward low complexity. 2 O-linked (GalNAc...) threonine glycosylation sites follow: Thr-901 and Thr-902. Positions 901-925 (TTAGRTQGSTPATTQVSPSSQNMST) are enriched in polar residues. The N-linked (GlcNAc...) asparagine glycan is linked to Asn-922. Positions 948-968 (KSTSTNPQTTTTPEVTTSNPS) are enriched in low complexity. Residues Thr-950, Thr-952, Thr-956, Thr-957, Thr-958, Thr-959, Thr-963, and Thr-964 are each glycosylated (O-linked (GalNAc...) threonine). The N-linked (GlcNAc...) asparagine glycan is linked to Asn-966. The span at 969-1003 (ATSHDQIETETSSQRTISPGETTTSYAPIMSSSAP) shows a compositional bias: polar residues. O-linked (GalNAc...) threonine glycans are attached at residues Thr-990, Thr-991, Thr-992, Thr-1005, Thr-1006, Thr-1011, Thr-1012, and Thr-1015. A compositionally biased stretch (low complexity) spans 1004 to 1019 (STTHMLSTTSSTQSTS). Residues 1020–1065 (VDTRNTTTLTTQGSTPATTQVSPSSKNMSTVSTPITSTHKLSTLPQ) are compositionally biased toward polar residues. Asn-1024 carries an N-linked (GlcNAc...) asparagine glycan. 5 O-linked (GalNAc...) threonine glycosylation sites follow: Thr-1025, Thr-1026, Thr-1027, Thr-1029, and Thr-1038. N-linked (GlcNAc...) asparagine glycosylation is found at Asn-1046, Asn-1072, and Asn-1091. Over residues 1066 to 1083 (SQHTGSNGTSSSSSTPAT) the composition is skewed to low complexity. Over residues 1091–1120 (NMSTVSTPITTTHKLSTLSQSQHTGSKGTS) the composition is skewed to polar residues. Positions 1121-1140 (SNPQTTTTPVMTTSTPSATT) are enriched in low complexity. Thr-1125, Thr-1126, Thr-1127, Thr-1128, Thr-1132, Thr-1133, Thr-1135, Thr-1140, Thr-1174, Thr-1198, and Thr-1207 each carry an O-linked (GalNAc...) threonine glycan. Composition is skewed to polar residues over residues 1141–1219 (HDQI…MSTV) and 1232–1242 (LPQSQHTGSKG). The N-linked (GlcNAc...) asparagine glycan is linked to Asn-1215. 20 O-linked (GalNAc...) threonine glycosylation sites follow: Thr-1243, Thr-1245, Thr-1249, Thr-1250, Thr-1251, Thr-1252, Thr-1256, Thr-1257, Thr-1259, Thr-1263, Thr-1270, Thr-1283, Thr-1284, Thr-1285, Thr-1298, Thr-1299, Thr-1304, Thr-1305, Thr-1318, and Thr-1319. Over residues 1243-1264 (TSTNPQTTTTPEVTTSTPSATS) the composition is skewed to low complexity. The segment covering 1265–1296 (RDQIQTETSSQRTISPGETTTSHAPIMSSSAP) has biased composition (polar residues). Low complexity predominate over residues 1297 to 1312 (STTHMLSTTSSTQSTS). Over residues 1318–1353 (TTAGRTQGSTPATTQVSPSSQNMTTTSHALMSSSAP) the composition is skewed to polar residues. Asn-1339 carries an N-linked (GlcNAc...) asparagine glycan. Residues Thr-1341, Thr-1342, Thr-1355, Thr-1356, Thr-1365, Thr-1368, Thr-1372, Thr-1375, Thr-1376, Thr-1377, and Thr-1379 are each glycosylated (O-linked (GalNAc...) threonine). The span at 1354-1390 (STTHMLSTTSSTQSTSVDTRHTTTVTTQGSTPATTQV) shows a compositional bias: low complexity. Composition is skewed to polar residues over residues 1391-1400 (LPSSQNMSTV) and 1413-1477 (LPQS…SSAP). A glycan (N-linked (GlcNAc...) asparagine) is linked at Asn-1396. 9 O-linked (GalNAc...) threonine glycosylation sites follow: Thr-1426, Thr-1430, Thr-1431, Thr-1440, Thr-1451, Thr-1453, Thr-1464, Thr-1465, and Thr-1466. N-linked (GlcNAc...) asparagine glycosylation is present at Asn-1471. The segment covering 1478–1489 (STTHMLSSTSST) has biased composition (low complexity). O-linked (GalNAc...) threonine glycans are attached at residues Thr-1479, Thr-1480, Thr-1499, and Thr-1512. 2 stretches are compositionally biased toward polar residues: residues 1490–1524 (QITSVDTGHTSAGRTQGSTPATTQVSPSSQNMSTV) and 1537–1553 (LPKSQHTGSKGTSSNPQ). N-linked (GlcNAc...) asparagine glycosylation occurs at Asn-1520. O-linked (GalNAc...) threonine glycosylation is found at Thr-1554, Thr-1555, Thr-1557, and Thr-1562. Residues 1554 to 1569 (TTITPVVTTSTPSASS) show a composition bias toward low complexity. Residues 1570–1587 (RDQIQTETSFQRTISPGE) are compositionally biased toward polar residues. 8 O-linked (GalNAc...) threonine glycosylation sites follow: Thr-1588, Thr-1589, Thr-1590, Thr-1604, Thr-1609, Thr-1627, Thr-1635, and Thr-1636. Positions 1588-1609 (TTTSHAPSMSSSAPSSTHMLST) are enriched in low complexity. A compositionally biased stretch (polar residues) spans 1610–1647 (ASSTQITSVDTRHTTAITTQGSTPATTQVSPSSQNMST). Asn-1644 is a glycosylation site (N-linked (GlcNAc...) asparagine). A compositionally biased stretch (low complexity) spans 1670–1693 (KSTSTNPQTTTTPRVTTSTPSASS). Residues Thr-1672, Thr-1674, Thr-1678, Thr-1679, Thr-1680, Thr-1681, Thr-1685, Thr-1686, Thr-1688, Thr-1699, and Thr-1714 are each glycosylated (O-linked (GalNAc...) threonine). Residues 1694 to 1725 (RDQIQTETSSQRTISPGKTTTSHVPNMNSSAP) show a composition bias toward polar residues. Residue Asn-1721 is glycosylated (N-linked (GlcNAc...) asparagine). A compositionally biased stretch (low complexity) spans 1726 to 1742 (STTHILSTTSSIQSTSG). The segment covering 1747–1837 (TTAVRTQGST…SSQRTISPGE (91 aa)) has biased composition (polar residues). The N-linked (GlcNAc...) asparagine glycan is linked to Asn-1770. O-linked (GalNAc...) threonine glycans are attached at residues Thr-1838, Thr-1839, Thr-1840, Thr-1854, Thr-1873, Thr-1874, Thr-1888, Thr-1889, and Thr-1891. Residues 1838–1859 (TTTSHASSLSSSAPSSTHMLST) show a composition bias toward low complexity. The span at 1860-1877 (ASSTEITSGDTRHTTAIV) shows a compositional bias: polar residues. Residues 1878–1895 (TQGSTPATTQTTLTPSSQ) show a composition bias toward low complexity. N-linked (GlcNAc...) asparagine glycosylation occurs at Asn-1896. A compositionally biased stretch (polar residues) spans 1896–1927 (NMSTVSTPITSTHKLSPLPQSQHTENMGTSSN). Residues 1928–1945 (PQTTTTPEVTTSTPSATS) are compositionally biased toward low complexity. O-linked (GalNAc...) threonine glycans are attached at residues Thr-1930, Thr-1931, Thr-1932, Thr-1933, Thr-1937, Thr-1938, Thr-1940, Thr-1964, Thr-1965, Thr-1966, and Thr-1980. A compositionally biased stretch (polar residues) spans 1946–1992 (YDQIQTETSFQRTISPGETTTSHAPSMSNSAPSSTHKLSTASSTEIT). N-linked (GlcNAc...) asparagine glycosylation is present at Asn-2022. Polar residues predominate over residues 2037–2055 (STLRQSQHTGSKGTSSNHQ). 4 disordered regions span residues 2037–2107 (STLR…NTTH), 2139–2185 (QVSL…NITP), 2205–2237 (TMSWGTSSSGTINTLSTPVRNTSPASTSGILTS), and 2262–2368 (TSTS…TVPL). Residues Thr-2056 and Thr-2057 are each glycosylated (O-linked (GalNAc...) threonine). The segment covering 2056 to 2071 (TTTTPVVTTSTSSATS) has biased composition (low complexity). Polar residues predominate over residues 2072 to 2089 (RDQIQTETSSLRTISPDG). 3 O-linked (GalNAc...) threonine glycosylation sites follow: Thr-2090, Thr-2091, and Thr-2092. Residues 2090-2107 (TTTSHASSMSSSSPNTTH) are compositionally biased toward low complexity. The N-linked (GlcNAc...) asparagine glycan is linked to Asn-2104. 2 O-linked (GalNAc...) threonine glycosylation sites follow: Thr-2105 and Thr-2106. N-linked (GlcNAc...) asparagine glycosylation is found at Asn-2148, Asn-2182, and Asn-2225. Polar residues-rich tracts occupy residues 2205–2229 (TMSWGTSSSGTINTLSTPVRNTSPA) and 2262–2303 (TSTS…QTSI). Thr-2264, Thr-2352, Thr-2354, Thr-2359, and Thr-2360 each carry an O-linked (GalNAc...) threonine glycan. Positions 2344–2367 (TAVSATSSTLTSPSPTTASRSTVP) are enriched in low complexity. In terms of domain architecture, NIDO spans 2458 to 2613 (PFWADADFSS…GLQVYRLHRE (156 aa)). In terms of domain architecture, AMOP spans 2614-2726 (ERPNYRLKCL…SFCVWYQLRR (113 aa)). The region spanning 2738-2937 (RPAWTFGDPH…TWHVNGTGLL (200 aa)) is the VWFD domain. Asn-2755, Asn-2773, Asn-2801, Asn-2827, Asn-2844, Asn-2853, Asn-2888, Asn-2909, Asn-2916, Asn-2932, Asn-2958, Asn-2985, Asn-3003, Asn-3014, Asn-3054, Asn-3079, Asn-3102, Asn-3109, Asn-3157, and Asn-3174 each carry an N-linked (GlcNAc...) asparagine glycan. Positions 3173-3212 (PNRSCPMNYCYNNGHCDISEAPGCQPTCTCPPAFTDNRCF) constitute an EGF-like 1 domain. 3 disulfide bridges follow: Cys-3177-Cys-3188, Cys-3182-Cys-3200, and Cys-3202-Cys-3211. N-linked (GlcNAc...) asparagine glycans are attached at residues Asn-3240, Asn-3247, and Asn-3353. An EGF-like 2 domain is found at 3382-3421 (VSPCSEGYCHNGGQCKHLPDGPQCSCASFTIYSSSGEHCE). 3 disulfide bridges follow: Cys-3385–Cys-3396, Cys-3390–Cys-3405, and Cys-3407–Cys-3420. The helical transmembrane segment at 3432 to 3452 (GILFGTLGALLLLGILAFMIF) threads the bilayer.

In terms of assembly, a heterodimeric complex, composed of a mucin-4 alpha chain and a cysteine-rich transmembrane mucin-4 beta chain. Mucin-4 beta chain interacts with ERBB2 via the EGF-like domain 1. In nonpolarized cells, associates with ERBB2 and ERBB3. Post-translationally, proteolytically cleaved into 2 chains, mucin-4 alpha chain and mucin-4 beta chain. Highly O-glycosylated. In terms of processing, predominantly N-glycosylated. Expressed in trachea, duodenum and intestine. Lower expression in stomach, salivary glands, liver, gallbladder, and kidney.

The protein localises to the cell membrane. It is found in the secreted. Functionally, membrane-bound mucin, a family of highly glycosylated proteins that constitute the major component of the mucus, the slimy and viscous secretion covering epithelial surfaces. These glycoproteins play important roles in the protection of the epithelium and are implicated in epithelial renewal and differentiation. Regulates cellular behavior through both anti-adhesive effects on cell-cell and cell-extracellular matrix interactions and its ability to act as an intramembrane ligand for ERBB2. Plays an important role in proliferation and differentiation of epithelial cells by inducing specific phosphorylation of ERBB2. In polarized epithelial cells, segregates ERBB2 and other ERBB receptors and prevents ERBB2 from acting as a coreceptor. The interaction with ERBB2 leads to enhanced expression of CDKN1B. The formation of a MUC4-ERBB2-ERBB3-NRG1 complex leads to down-regulation of CDKN1B, resulting in repression of apoptosis and stimulation of proliferation. Its ability to promote tumor growth may be mainly due to repression of apoptosis as opposed to proliferation. The polypeptide is Mucin-4 (Muc4) (Mus musculus (Mouse)).